The following is a 39-amino-acid chain: Potassium channel toxin alpha-KTx 2.1 (39 aa).

Cystine bridges form between Cys-7–Cys-29, Cys-13–Cys-34, and Cys-17–Cys-36. The tract at residues 26–34 is interaction with Ca(2+)-activated K(+) channels; that stretch reads GAKCMNGKC. Asn-39 carries the post-translational modification Asparagine amide.

This sequence belongs to the short scorpion toxin superfamily. Potassium channel inhibitor family. Alpha-KTx 02 subfamily. As to expression, expressed by the venom gland.

It is found in the secreted. Its function is as follows. Blocks voltage-gated potassium channels (mKv1.1/KCNA1 (Kd&gt;25 nM), rKv1.2/KCNA2 (Kd=2 nM), mKv1.3/KCNA3 (Kd=1 nM), hKv1.5/KCNA5 (Kd&gt;25 nM) and mKv3.1/KCNC1 (Kd&gt;25 nM)) and calcium-activated potassium channels (KCa1.1/KCNMA1 and KCa3.1/KCNN4, Kd&gt;25 nM). This chain is Potassium channel toxin alpha-KTx 2.1, found in Centruroides noxius (Mexican scorpion).